A 277-amino-acid chain; its full sequence is Large ribosomal subunit protein uL2 (277 aa).

Residues 199-277 form a disordered region; that stretch reads DHGNINDGKA…ILRSRHQRKS (79 aa).

This sequence belongs to the universal ribosomal protein uL2 family. As to quaternary structure, part of the 50S ribosomal subunit. Forms a bridge to the 30S subunit in the 70S ribosome.

In terms of biological role, one of the primary rRNA binding proteins. Required for association of the 30S and 50S subunits to form the 70S ribosome, for tRNA binding and peptide bond formation. It has been suggested to have peptidyltransferase activity; this is somewhat controversial. Makes several contacts with the 16S rRNA in the 70S ribosome. The chain is Large ribosomal subunit protein uL2 from Mesorhizobium japonicum (strain LMG 29417 / CECT 9101 / MAFF 303099) (Mesorhizobium loti (strain MAFF 303099)).